Here is a 429-residue protein sequence, read N- to C-terminus: Putative zinc metalloprotease aq_1964 (429 aa).

Histidine 17 lines the Zn(2+) pocket. The active site involves glutamate 18. Histidine 21 serves as a coordination point for Zn(2+). Residues 88–110 (ILIALGGPLFNFLFTILVFALVY) form a helical membrane-spanning segment. A PDZ domain is found at 189–265 (TIKVPNVQKG…AIKLKILRNG (77 aa)). Transmembrane regions (helical) follow at residues 369–391 (IFNLIPLPILDGGLILLFAIEWL) and 406–428 (RVGLAIIITLTIFVFINDILRLL).

Belongs to the peptidase M50B family. Zn(2+) serves as cofactor.

It is found in the cell inner membrane. The sequence is that of Putative zinc metalloprotease aq_1964 from Aquifex aeolicus (strain VF5).